Reading from the N-terminus, the 1166-residue chain is MGVEFLVGRSGSGKTRLIIDSIQDELRREPFGKPIIFLVPDQMTFLMEYELAKTPDIGGMIRAQVFSFSRLAWRVLQHTGGMNRPFVTTTGVQMLLRKLIEEHKHEFKVYQKASDKTGFTEQVERMLTEFKRYCIEPEDVRRMAESGTASEYRGERMLSEKLHDLGILYQQMERSLAGHYLHSEDYLTLLAQQIPLADVVKGAHVYVDGFYQFTPQELRVLEQLIMHAEHVTFSLTADSPSAEQAPDELDLFRMTGSTYYKLYQTAKELNADISCKELHGTKRHQHAPELACIESQYDVRPAAAYTGGQEAFTVMQAQNRRAELEGIAREIQSLVRDGGYRYKDMAILIRQPEDYKDLLKEVFADYGLPYFIDGKASMQHHPLIEFIRSSLDVVKGNWRYEAVFRCAKTELLFPLDQPEQKIREQVDQLENYCIAYGIKGERWTSGERFVYRRFVSLDEDFAQTDQEIEMEHMLNETKEWMAAPLVKLQNRMKKAKTVQSMAEALYLFLEDTDVPLKLDRKRQRAEEAGNMIEAQQHGQAWDAVIQLLEEFAGMMGEDEISLALFQQMLETGTESLHFSLIPPALDQVFVGNMDLSRMYGTSCTFVIGANDGVLPARPDENGVLSDDDREWLKAVGVELSSAGRERLLDEHFLIYMALSSPSDRLYVSYPIADAEGKTLLPSIVVNRLGELFPDHQEKLSAADPEQVSEEEQLQYLVNKQVAQTYTASQLRLWTREYEISDVWWSAYNVLMKEPDHRRAKKLFSSLFFRNEAKRLERPVSRQLYGEHIKGSVSRMEAFNACQFSHFASHGLQLKERQFFKLDAPDIGQLFHSSLKLISDRLREQKLEWRDLTKDQCRNFSYEAVERLAPKLQKEILLSSNRHFYVKEKLQKIVTRVSGILSEHAKASGFVPVGLELGFGGSGPLPPLTFTLKNGCTMELVGRIDRVDKAESSKGLLLRIVDYKSSDRGLDLAEVYYGLALQMLTYLDLSITHSEDWLGMKATPAGVLYFHIHDPMIQASLPMGLDEIEQEIFKKFKMKGLLLGDREAISLMDTTLEEGRSNIVNAGLKKDGSLRSDSAAVSEQDFHLLTDHVRRTFEQAGEAITDGLVSITPYKLKDKTPCTYCAFQSVCQFDESLKENEYRSLKAEKDGTILDWLKKEADDDANS.

One can recognise a UvrD-like helicase ATP-binding domain in the interval 1–390 (MGVEFLVGRS…HPLIEFIRSS (390 aa)). 8–15 (GRSGSGKT) provides a ligand contact to ATP. One can recognise a UvrD-like helicase C-terminal domain in the interval 281 to 586 (TKRHQHAPEL…HFSLIPPALD (306 aa)). The [4Fe-4S] cluster site is built by Cys801, Cys1121, Cys1124, and Cys1130.

This sequence belongs to the helicase family. AddB/RexB type 1 subfamily. Heterodimer of AddA and AddB. Mg(2+) is required as a cofactor. Requires [4Fe-4S] cluster as cofactor.

Functionally, the heterodimer acts as both an ATP-dependent DNA helicase and an ATP-dependent, dual-direction single-stranded exonuclease. Recognizes the chi site generating a DNA molecule suitable for the initiation of homologous recombination. The AddB subunit has 5' -&gt; 3' nuclease activity but not helicase activity. The chain is ATP-dependent helicase/deoxyribonuclease subunit B from Bacillus velezensis (strain DSM 23117 / BGSC 10A6 / LMG 26770 / FZB42) (Bacillus amyloliquefaciens subsp. plantarum).